The sequence spans 505 residues: Glycerol kinase (505 aa).

ADP is bound at residue Thr-12. Thr-12, Thr-13, and Ser-14 together coordinate ATP. Position 12 (Thr-12) interacts with sn-glycerol 3-phosphate. Residue Arg-16 participates in ADP binding. The sn-glycerol 3-phosphate site is built by Arg-82, Glu-83, Tyr-134, and Asp-249. Positions 82, 83, 134, 249, and 250 each coordinate glycerol. Positions 271 and 315 each coordinate ADP. ATP is bound by residues Thr-271, Gly-315, Gln-319, and Gly-416. 2 residues coordinate ADP: Gly-416 and Asn-420.

Belongs to the FGGY kinase family.

It catalyses the reaction glycerol + ATP = sn-glycerol 3-phosphate + ADP + H(+). Its pathway is polyol metabolism; glycerol degradation via glycerol kinase pathway; sn-glycerol 3-phosphate from glycerol: step 1/1. With respect to regulation, inhibited by fructose 1,6-bisphosphate (FBP). Its function is as follows. Key enzyme in the regulation of glycerol uptake and metabolism. Catalyzes the phosphorylation of glycerol to yield sn-glycerol 3-phosphate. This chain is Glycerol kinase, found in Mycolicibacterium gilvum (strain PYR-GCK) (Mycobacterium gilvum (strain PYR-GCK)).